The following is a 380-amino-acid chain: uncharacterized protein (380 aa).

The segment at 251–275 is disordered; it reads NMSERPPTPSHDTASSSTSTDPNPL. A compositionally biased stretch (low complexity) spans 260 to 272; it reads SHDTASSSTSTDP.

This is an uncharacterized protein from Allium cepa var. aggregatum (Shallot).